The sequence spans 458 residues: tRNA-2-methylthio-N(6)-dimethylallyladenosine synthase (458 aa).

The MTTase N-terminal domain maps to 3 to 120 (QKLYIETFGC…LPSMLEQVRC (118 aa)). [4Fe-4S] cluster-binding residues include Cys12, Cys49, Cys83, Cys157, Cys161, and Cys164. Residues 143–375 (RADGPKAFVS…QAKIADNAAK (233 aa)) enclose the Radical SAM core domain. A TRAM domain is found at 378-441 (ASMVGSIQSV…PNSLRGRLIG (64 aa)).

This sequence belongs to the methylthiotransferase family. MiaB subfamily. As to quaternary structure, monomer. [4Fe-4S] cluster is required as a cofactor.

It is found in the cytoplasm. The catalysed reaction is N(6)-dimethylallyladenosine(37) in tRNA + (sulfur carrier)-SH + AH2 + 2 S-adenosyl-L-methionine = 2-methylsulfanyl-N(6)-dimethylallyladenosine(37) in tRNA + (sulfur carrier)-H + 5'-deoxyadenosine + L-methionine + A + S-adenosyl-L-homocysteine + 2 H(+). Catalyzes the methylthiolation of N6-(dimethylallyl)adenosine (i(6)A), leading to the formation of 2-methylthio-N6-(dimethylallyl)adenosine (ms(2)i(6)A) at position 37 in tRNAs that read codons beginning with uridine. The protein is tRNA-2-methylthio-N(6)-dimethylallyladenosine synthase of Methylococcus capsulatus (strain ATCC 33009 / NCIMB 11132 / Bath).